A 236-amino-acid chain; its full sequence is Lipoprotein NlpE (236 aa).

An N-terminal signal peptide occupies residues 1–20; that stretch reads MVKKAIVTAMAVISLFTLMG. The N-palmitoyl cysteine moiety is linked to residue cysteine 21. The S-diacylglycerol cysteine moiety is linked to residue cysteine 21. The tract at residues 21-100 is N-terminal domain; it reads CNNRAEVDTL…WARTADKLVL (80 aa). Over 21–236 the chain is Periplasmic; sequence CNNRAEVDTL…PNQDCSSLGQ (216 aa). Residues 51-54 carry the CXXC motif; the sequence is CADC. A C-terminal domain region spans residues 126-236; sequence PIESQFNYTL…PNQDCSSLGQ (111 aa). The segment at 144–156 is could contain a copper-binding motif; the sequence is MTPMTLRGMYFYM. Cysteines 165 and 231 form a disulfide.

In terms of assembly, probably exists as a monomer in vivo, can however form homodimers which swap domains. In terms of processing, palmitoylated. Seems to only form a disulfide bond between Cys-165 and Cys-231. The 2 other cysteine residues may however be chemically active.

It is found in the cell outer membrane. Involved in copper homeostasis, could be involved in both copper efflux and the delivery of copper to copper-dependent enzymes. Required for efficient binding of stationary phase cells to hydrophobic surfaces, part of the process of biofilm formation. Functions during envelope stress responses; when overproduced induces degP through the activation of the two-component envelope stress response system CpxA/CpxR. DegP induction seems to require membrane anchoring of this protein. Structural changes and/or interaction of the CXXC motif with its environment may lead to activation of the Cpx stress response. The polypeptide is Lipoprotein NlpE (Escherichia coli (strain K12)).